We begin with the raw amino-acid sequence, 654 residues long: Bifunctional 3'-phosphoadenosine 5'-phosphosulfate synthase pps-1 (654 aa).

The interval 1-26 (MLTPRDENNEGDAMPMLKKPRYSSLS) is disordered. Residues 1–231 (MLTPRDENNE…VLDHLESKGL (231 aa)) are adenylyl-sulfate kinase. 66-71 (GAGKTT) is a binding site for ATP. Adenosine 5'-phosphosulfate-binding positions include 93–96 (DNIR), Phe105, 110–113 (RQEN), 136–137 (IS), Lys175, and 190–191 (GF). ATP-binding positions include Cys218, 449–452 (QLRN), 550–554 (GRDPA), and Ala592. A sulfate adenylyltransferase region spans residues 242–653 (VRELFVSDDL…AGYYKSLQNS (412 aa)).

It in the N-terminal section; belongs to the APS kinase family. This sequence in the C-terminal section; belongs to the sulfate adenylyltransferase family.

Its subcellular location is the nucleus. The enzyme catalyses sulfate + ATP + H(+) = adenosine 5'-phosphosulfate + diphosphate. It carries out the reaction adenosine 5'-phosphosulfate + ATP = 3'-phosphoadenylyl sulfate + ADP + H(+). Its pathway is sulfur metabolism; sulfate assimilation. Its function is as follows. Bifunctional enzyme with both ATP sulfurylase and APS kinase activity, which mediates two steps in the sulfate activation pathway. The first step is the transfer of a sulfate group to ATP to yield adenosine 5'-phosphosulfate (APS), and the second step is the transfer of a phosphate group from ATP to APS yielding 3'-phosphoadenylylsulfate (PAPS: activated sulfate donor used by sulfotransferase). Required for normal growth and development. Involved in several aspects of both embryonic and postembryonic development, including molting, changes in cell shape, and patterning of epithelial and muscle cells. The polypeptide is Bifunctional 3'-phosphoadenosine 5'-phosphosulfate synthase pps-1 (Caenorhabditis elegans).